The primary structure comprises 221 residues: Small ribosomal subunit protein uS3 (221 aa).

In terms of domain architecture, KH type-2 spans 39–107 (IREYIKRKLY…QVHVNIVEVK (69 aa)).

It belongs to the universal ribosomal protein uS3 family. As to quaternary structure, part of the 30S ribosomal subunit. Forms a tight complex with proteins S10 and S14.

Binds the lower part of the 30S subunit head. Binds mRNA in the 70S ribosome, positioning it for translation. This Desulforamulus reducens (strain ATCC BAA-1160 / DSM 100696 / MI-1) (Desulfotomaculum reducens) protein is Small ribosomal subunit protein uS3.